Here is a 329-residue protein sequence, read N- to C-terminus: Malate dehydrogenase (329 aa).

12–18 (GAAGQIG) contacts NAD(+). Substrate contacts are provided by R93 and R99. Residues N106, Q113, and 130 to 132 (TGN) each bind NAD(+). 2 residues coordinate substrate: N132 and R163. H188 serves as the catalytic Proton acceptor.

This sequence belongs to the LDH/MDH superfamily. MDH type 2 family.

It catalyses the reaction (S)-malate + NAD(+) = oxaloacetate + NADH + H(+). In terms of biological role, catalyzes the reversible oxidation of malate to oxaloacetate. The protein is Malate dehydrogenase of Mycolicibacterium paratuberculosis (strain ATCC BAA-968 / K-10) (Mycobacterium paratuberculosis).